A 124-amino-acid chain; its full sequence is MATINQLVRKPRARKVAKSNVPALEACPQKRGVCTRVYTTTPKKPNSALRKVCRVRLTNGFEVTSYIGGEGHNLQEHSVILIRGGRVKDLPGVRYHTVRGALDCSGVKDRKQARSKYGVKRPKA.

Asp-89 carries the post-translational modification 3-methylthioaspartic acid.

Belongs to the universal ribosomal protein uS12 family. Part of the 30S ribosomal subunit. Contacts proteins S8 and S17. May interact with IF1 in the 30S initiation complex.

In terms of biological role, with S4 and S5 plays an important role in translational accuracy. Its function is as follows. Interacts with and stabilizes bases of the 16S rRNA that are involved in tRNA selection in the A site and with the mRNA backbone. Located at the interface of the 30S and 50S subunits, it traverses the body of the 30S subunit contacting proteins on the other side and probably holding the rRNA structure together. The combined cluster of proteins S8, S12 and S17 appears to hold together the shoulder and platform of the 30S subunit. This is Small ribosomal subunit protein uS12 from Klebsiella pneumoniae (strain 342).